Here is a 206-residue protein sequence, read N- to C-terminus: MYDYLKGLITRITPEYIVLEQKGIGWQLNTPNPFAFRTSAMEQQIYVHLHVREDAQVLYGFPNLDQRELFRKLILVSGIGPKGALAILATGNPQQVISAIEREDETFLVKFPGVGKKTARQMILDLKGKLGSLLETIELPSTEDELPLFGVHPYKHELEEAILALAALGYSEKELEKIRPLLEDNDKLETTDAYMKQALQLLLKLK.

Residues Met1–Pro62 are domain I. The segment at Asn63–Ser141 is domain II. A flexible linker region spans residues Thr142–His152. Positions Pro153–Lys206 are domain III.

It belongs to the RuvA family. As to quaternary structure, homotetramer. Forms an RuvA(8)-RuvB(12)-Holliday junction (HJ) complex. HJ DNA is sandwiched between 2 RuvA tetramers; dsDNA enters through RuvA and exits via RuvB. An RuvB hexamer assembles on each DNA strand where it exits the tetramer. Each RuvB hexamer is contacted by two RuvA subunits (via domain III) on 2 adjacent RuvB subunits; this complex drives branch migration. In the full resolvosome a probable DNA-RuvA(4)-RuvB(12)-RuvC(2) complex forms which resolves the HJ.

Its subcellular location is the cytoplasm. The RuvA-RuvB-RuvC complex processes Holliday junction (HJ) DNA during genetic recombination and DNA repair, while the RuvA-RuvB complex plays an important role in the rescue of blocked DNA replication forks via replication fork reversal (RFR). RuvA specifically binds to HJ cruciform DNA, conferring on it an open structure. The RuvB hexamer acts as an ATP-dependent pump, pulling dsDNA into and through the RuvAB complex. HJ branch migration allows RuvC to scan DNA until it finds its consensus sequence, where it cleaves and resolves the cruciform DNA. The polypeptide is Holliday junction branch migration complex subunit RuvA (Lysinibacillus sphaericus (strain C3-41)).